A 169-amino-acid polypeptide reads, in one-letter code: MSNSRWDGYQQATQAPGLNRQFDTQTNVLAADSFVRSGLVGQQVNTIDPSFYDCIYGVANSANTVIERCYKDIGCCADGCCKNGYWHNRYGWAVALIVIFCILVIVAFVIWLVVWLFNRSKDKQQKRELYEHYEENNYSGLPTPQPTPTHYPAEQYSYDPARDRDNYRY.

Residues 97–117 form a helical membrane-spanning segment; it reads IVIFCILVIVAFVIWLVVWLF. The interval 137–169 is disordered; sequence NYSGLPTPQPTPTHYPAEQYSYDPARDRDNYRY. Basic and acidic residues predominate over residues 160–169; the sequence is PARDRDNYRY.

Its subcellular location is the membrane. This is an uncharacterized protein from Caenorhabditis elegans.